The chain runs to 704 residues: ATP-dependent DNA helicase Hel308 (704 aa).

Residues Q31 and 49–56 (SPTASGKT) each bind ATP. Positions 36–200 (RKGLLDGKRL…WLNAELVATN (165 aa)) constitute a Helicase ATP-binding domain. A DEAH box motif is present at residues 148-151 (DEFH). Residues 235–439 (AIIAYTLDIV…AFYSFLISII (205 aa)) form the Helicase C-terminal domain. A binds Hjc region spans residues 366 to 645 (VVGYMDLIPV…LHARVKDGVK (280 aa)). A required for helicase activity region spans residues 432 to 644 (YSFLISIIAS…ELHARVKDGV (213 aa)). The segment at 646 to 704 (PELIELVKIPGIGRVRARLLYQHDIKKPEDIVLNPEKVKQLLGPNLGEKIVREAARTIA) is inhibits intrinsic ATPase, and helicase.

The protein belongs to the helicase family. Hel308 subfamily. In terms of assembly, monomer; forms a 1:2 complex with Hjc, which may form a complex with Holliday junction DNA. Mg(2+) is required as a cofactor.

The enzyme catalyses Couples ATP hydrolysis with the unwinding of duplex DNA by translocating in the 3'-5' direction.. The catalysed reaction is ATP + H2O = ADP + phosphate + H(+). It carries out the reaction Couples ATP hydrolysis with the unwinding of duplex DNA at the replication fork by translocating in the 5'-3' direction. This creates two antiparallel DNA single strands (ssDNA). The leading ssDNA polymer is the template for DNA polymerase III holoenzyme which synthesizes a continuous strand.. With respect to regulation, helicase activity is inhibited by Hjc and by PCNA123 and PCNA323. Functionally, an ATP, Mg(2+)-dependent DNA 3'-5' and 5'-3' helicase that may be involved in repair of stalled replication forks. Stimulated by both ss and dsDNA. Unwinds both leading and lagging strands in replication fork structures, unlike orthologs in P.furiosus and M.thermautotrophicus which only unwind the lagging strand and only have 3'-5' helicase activity. Preferentially binds dsDNA with overhangs or branched DNA. Able to anneal DNA substrates that could form a replication fork-like structure, has replication fork reversal activity (at least in vitro). The polypeptide is ATP-dependent DNA helicase Hel308 (Sulfurisphaera tokodaii (strain DSM 16993 / JCM 10545 / NBRC 100140 / 7) (Sulfolobus tokodaii)).